Consider the following 445-residue polypeptide: Phosphoglucosamine mutase (445 aa).

Catalysis depends on Ser102, which acts as the Phosphoserine intermediate. 4 residues coordinate Mg(2+): Ser102, Asp241, Asp243, and Asp245. The residue at position 102 (Ser102) is a Phosphoserine.

Belongs to the phosphohexose mutase family. Mg(2+) is required as a cofactor. In terms of processing, activated by phosphorylation.

The catalysed reaction is alpha-D-glucosamine 1-phosphate = D-glucosamine 6-phosphate. Its function is as follows. Catalyzes the conversion of glucosamine-6-phosphate to glucosamine-1-phosphate. This is Phosphoglucosamine mutase from Rhodococcus erythropolis (strain PR4 / NBRC 100887).